We begin with the raw amino-acid sequence, 304 residues long: Ribosomal protein L11 methyltransferase (304 aa).

4 residues coordinate S-adenosyl-L-methionine: Thr147, Gly168, Asp190, and Asn238.

This sequence belongs to the methyltransferase superfamily. PrmA family.

It localises to the cytoplasm. It catalyses the reaction L-lysyl-[protein] + 3 S-adenosyl-L-methionine = N(6),N(6),N(6)-trimethyl-L-lysyl-[protein] + 3 S-adenosyl-L-homocysteine + 3 H(+). Functionally, methylates ribosomal protein L11. The chain is Ribosomal protein L11 methyltransferase from Prochlorococcus marinus (strain SARG / CCMP1375 / SS120).